Here is a 146-residue protein sequence, read N- to C-terminus: Acidic phospholipase A2 C (146 aa).

The N-terminal stretch at Met1–Ser21 is a signal peptide. Residues Asn22–Leu27 constitute a propeptide that is removed on maturation. 7 disulfides stabilise this stretch: Cys38-Cys98, Cys53-Cys145, Cys55-Cys71, Cys70-Cys126, Cys77-Cys119, Cys87-Cys112, and Cys105-Cys117. Tyr54, Gly56, and Gly58 together coordinate Ca(2+). Residue His74 is part of the active site. Ca(2+) is bound at residue Asp75. Residue Asp120 is part of the active site.

The protein belongs to the phospholipase A2 family. Group I subfamily. D49 sub-subfamily. Ca(2+) is required as a cofactor. As to expression, expressed by the venom gland.

Its subcellular location is the secreted. It catalyses the reaction a 1,2-diacyl-sn-glycero-3-phosphocholine + H2O = a 1-acyl-sn-glycero-3-phosphocholine + a fatty acid + H(+). In terms of biological role, PLA2 catalyzes the calcium-dependent hydrolysis of the 2-acyl groups in 3-sn-phosphoglycerides. This Naja sputatrix (Malayan spitting cobra) protein is Acidic phospholipase A2 C.